A 224-amino-acid polypeptide reads, in one-letter code: MNILIFGPPGSGKSTHSRTIMEKYGLVYISSGDLIRREIERKSSLGREMEAYLSRGDLIPDTIVNTLIISKLRRQRENFILDGYPRTPEQVISLENYLFDHGIKLDLALEIFIDEDTSVERISGRRICPNCGAVYHVKYNPPKVPGICDVCGSELIQRADDREEVVRKRYRIYSKNMEPIIKFYRAKGIYVRVDGDGPISEVWKRIQPLLDYIHSREEKRKEHE.

10–15 (GSGKST) is an ATP binding site. The interval 30 to 59 (SSGDLIRREIERKSSLGREMEAYLSRGDLI) is NMP. AMP contacts are provided by residues serine 31, arginine 36, 57–59 (DLI), 83–86 (GYPR), and glutamine 90. An LID region spans residues 124 to 161 (GRRICPNCGAVYHVKYNPPKVPGICDVCGSELIQRADD). Arginine 125 lines the ATP pocket. Cysteine 128 and cysteine 131 together coordinate Zn(2+). Residue 134-135 (VY) coordinates ATP. Cysteine 148 and cysteine 151 together coordinate Zn(2+). AMP contacts are provided by arginine 158 and arginine 169. Glycine 197 is an ATP binding site.

The protein belongs to the adenylate kinase family. As to quaternary structure, monomer.

It localises to the cytoplasm. It carries out the reaction AMP + ATP = 2 ADP. The protein operates within purine metabolism; AMP biosynthesis via salvage pathway; AMP from ADP: step 1/1. Functionally, catalyzes the reversible transfer of the terminal phosphate group between ATP and AMP. Plays an important role in cellular energy homeostasis and in adenine nucleotide metabolism. The protein is Adenylate kinase of Thermococcus kodakarensis (strain ATCC BAA-918 / JCM 12380 / KOD1) (Pyrococcus kodakaraensis (strain KOD1)).